The sequence spans 426 residues: Methionine aminopeptidase 2 (426 aa).

The segment at 1-72 (MTSATTTEAT…QEQTNPPTVG (72 aa)) is disordered. Basic and acidic residues predominate over residues 10–34 (TAKDLQEKLSLKENDVVEDDGKVEE). Residues 47-60 (KKKKKKKKSSKKKK) are compositionally biased toward basic residues. His-179 lines the substrate pocket. A divalent metal cation contacts are provided by Asp-199, Asp-210, and His-279. His-287 is a substrate binding site. A divalent metal cation contacts are provided by Glu-312 and Glu-407.

Belongs to the peptidase M24A family. Methionine aminopeptidase eukaryotic type 2 subfamily. Requires Co(2+) as cofactor. Zn(2+) serves as cofactor. Mn(2+) is required as a cofactor. It depends on Fe(2+) as a cofactor.

It is found in the cytoplasm. The enzyme catalyses Release of N-terminal amino acids, preferentially methionine, from peptides and arylamides.. Cotranslationally removes the N-terminal methionine from nascent proteins. The N-terminal methionine is often cleaved when the second residue in the primary sequence is small and uncharged (Met-Ala-, Cys, Gly, Pro, Ser, Thr, or Val). The protein is Methionine aminopeptidase 2 (fma2) of Schizosaccharomyces pombe (strain 972 / ATCC 24843) (Fission yeast).